The primary structure comprises 766 residues: Oligopeptide transporter 7 (766 aa).

The interval 1 to 58 is disordered; it reads MEESEQVLPLLTNPKDLTNPSYASSSSSSSEPRDETEDLLLPISDENEEEEEENSPIR. Residues 45–54 are compositionally biased toward acidic residues; sequence DENEEEEEEN. Helical transmembrane passes span 79 to 99, 104 to 124, 154 to 174, 184 to 204, 247 to 267, 287 to 307, 324 to 344, 390 to 410, 446 to 466, 477 to 497, 509 to 529, 561 to 581, 627 to 647, 676 to 696, and 709 to 729; these read MWVL…FFWY, LTIS…LMAA, ITIF…VTVV, FFVS…WAGI, FVIA…LFQI, IGSG…STIS, VGVG…WLDV, LCTF…ATIM, VPEW…IFAC, WWGV…IGII, IITE…NMCF, FMAQ…TAWW, LYKS…LVWL, ATAV…FVVF, and VLSG…YMCL.

It belongs to the oligopeptide OPT transporter (TC 2.A.67.1) family. As to expression, expressed in the major and the first-order veins and in the hydathodes of the leaves. In the roots, expressed in circular zones surrounding lateral root primordia and in some part of the root epidermis. Expressed also in the sepals and the cortical tissues of the stem, but not in the conducting bundles, the petals or the reproductive tissues.

It is found in the membrane. Its function is as follows. Involved in the translocation of tetra- and pentapeptides across the cellular membrane in an energy-dependent manner. May also transport cadmium complexes. The sequence is that of Oligopeptide transporter 7 (OPT7) from Arabidopsis thaliana (Mouse-ear cress).